Reading from the N-terminus, the 156-residue chain is Small ribosomal subunit protein uS7 (156 aa).

The protein belongs to the universal ribosomal protein uS7 family. As to quaternary structure, part of the 30S ribosomal subunit. Contacts proteins S9 and S11.

One of the primary rRNA binding proteins, it binds directly to 16S rRNA where it nucleates assembly of the head domain of the 30S subunit. Is located at the subunit interface close to the decoding center, probably blocks exit of the E-site tRNA. In Pelotomaculum thermopropionicum (strain DSM 13744 / JCM 10971 / SI), this protein is Small ribosomal subunit protein uS7.